Reading from the N-terminus, the 407-residue chain is MSKINKVVLAYSGGLDTSVIVKWLQDTYDCEVVTFTADIGQGEEVEPARAKAEAMGVKEIYIEDLREEFVRDYVFPMFRANAIYEGEYLLGTSIARPLIAKRLVEIAEETGADAISHGATGKGNDQVRFELGAYALAPGIQVIAPWREWDLNSREKLMAYCEERNIPVDFSNKKKKSPYSMDANLLHISYEGGNLEDPWWEAEEDMWRWSVSPEAAPDQATYITLGFEKGDIVSIDGETLSPADVLTKLNKLGGDNGIGRLDIVENRYVGMKSRGCYETPGGTIMLPAHRAIESLTLDRESAHLKDSVMPKYAELLYNGYWWSPERLALQKLIDATQEHVNGEVRLKLYKGSVTVVGRRSDNDSLFDASIATFEDDAGAYDQKDAEGFIKLNALRLRIAAKTGRKLS.

Residues 10-18 (AYSGGLDTS) and A37 contribute to the ATP site. Y88 and S93 together coordinate L-citrulline. G118 is an ATP binding site. 3 residues coordinate L-aspartate: T120, N124, and D125. L-citrulline is bound at residue N124. L-citrulline contacts are provided by R128, S180, S189, E265, and Y277.

This sequence belongs to the argininosuccinate synthase family. Type 1 subfamily. As to quaternary structure, homotetramer.

The protein resides in the cytoplasm. The catalysed reaction is L-citrulline + L-aspartate + ATP = 2-(N(omega)-L-arginino)succinate + AMP + diphosphate + H(+). It participates in amino-acid biosynthesis; L-arginine biosynthesis; L-arginine from L-ornithine and carbamoyl phosphate: step 2/3. The polypeptide is Argininosuccinate synthase (Alcanivorax borkumensis (strain ATCC 700651 / DSM 11573 / NCIMB 13689 / SK2)).